We begin with the raw amino-acid sequence, 639 residues long: Mediator of RNA polymerase II transcription subunit 17 (639 aa).

It belongs to the Mediator complex subunit 17 family. Component of the Mediator complex.

Its subcellular location is the nucleus. Functionally, component of the Mediator complex, a coactivator involved in the regulated transcription of nearly all RNA polymerase II-dependent genes. Mediator functions as a bridge to convey information from gene-specific regulatory proteins to the basal RNA polymerase II transcription machinery. Mediator is recruited to promoters by direct interactions with regulatory proteins and serves as a scaffold for the assembly of a functional preinitiation complex with RNA polymerase II and the general transcription factors. The sequence is that of Mediator of RNA polymerase II transcription subunit 17 (med17) from Xenopus tropicalis (Western clawed frog).